We begin with the raw amino-acid sequence, 648 residues long: Macrolide export ATP-binding/permease protein MacB (648 aa).

The 239-residue stretch at 5–243 (LELKDIRRSY…AGGTEPVVNT (239 aa)) folds into the ABC transporter domain. Position 41-48 (41-48 (GASGSGKS)) interacts with ATP. 4 helical membrane passes run 273–293 (LLTMLGIIIGIASVVSIVVVG), 523–543 (LFLTLVAVISLVVGGIGVMNI), 576–596 (AVLVCLVGGALGITLSLLIAF), and 600–620 (LFLPGWEIGFSPLALLLAFLC).

Belongs to the ABC transporter superfamily. Macrolide exporter (TC 3.A.1.122) family. Homodimer. Part of the tripartite efflux system MacAB-TolC, which is composed of an inner membrane transporter, MacB, a periplasmic membrane fusion protein, MacA, and an outer membrane component, TolC. The complex forms a large protein conduit and can translocate molecules across both the inner and outer membranes. Interacts with MacA.

The protein localises to the cell inner membrane. Functionally, part of the tripartite efflux system MacAB-TolC. MacB is a non-canonical ABC transporter that contains transmembrane domains (TMD), which form a pore in the inner membrane, and an ATP-binding domain (NBD), which is responsible for energy generation. Confers resistance against macrolides. The chain is Macrolide export ATP-binding/permease protein MacB from Shigella boydii serotype 4 (strain Sb227).